A 241-amino-acid polypeptide reads, in one-letter code: tRNA (guanine-N(7)-)-methyltransferase (241 aa).

Over residues 1-10 (MTESNDTPIQ) the composition is skewed to polar residues. The tract at residues 1-20 (MTESNDTPIQTEEGDERQHR) is disordered. S-adenosyl-L-methionine contacts are provided by glutamate 71, glutamate 96, aspartate 123, and aspartate 146. Aspartate 146 is a catalytic residue. Substrate-binding positions include lysine 150, aspartate 182, and 219 to 222 (TKFE).

It belongs to the class I-like SAM-binding methyltransferase superfamily. TrmB family.

The enzyme catalyses guanosine(46) in tRNA + S-adenosyl-L-methionine = N(7)-methylguanosine(46) in tRNA + S-adenosyl-L-homocysteine. Its pathway is tRNA modification; N(7)-methylguanine-tRNA biosynthesis. Functionally, catalyzes the formation of N(7)-methylguanine at position 46 (m7G46) in tRNA. The polypeptide is tRNA (guanine-N(7)-)-methyltransferase (Pseudomonas fluorescens (strain Pf0-1)).